Reading from the N-terminus, the 87-residue chain is Small ribosomal subunit protein uS15 (87 aa).

Basic and acidic residues predominate over residues 1-19 (MEKARKEQLIREYATHEGD). Residues 1 to 22 (MEKARKEQLIREYATHEGDTGS) are disordered.

The protein belongs to the universal ribosomal protein uS15 family. As to quaternary structure, part of the 30S ribosomal subunit. Forms a bridge to the 50S subunit in the 70S ribosome, contacting the 23S rRNA.

Functionally, one of the primary rRNA binding proteins, it binds directly to 16S rRNA where it helps nucleate assembly of the platform of the 30S subunit by binding and bridging several RNA helices of the 16S rRNA. Forms an intersubunit bridge (bridge B4) with the 23S rRNA of the 50S subunit in the ribosome. This Clostridium novyi (strain NT) protein is Small ribosomal subunit protein uS15.